The chain runs to 275 residues: Lectin (275 aa).

The first 30 residues, methionine 1–serine 30, serve as a signal peptide directing secretion. Residues aspartate 111 and glycine 129 each coordinate D-glucose. Mn(2+)-binding residues include glutamate 149 and aspartate 151. 4 residues coordinate Ca(2+): aspartate 151, phenylalanine 153, asparagine 155, and aspartate 159. 2 residues coordinate Mn(2+): aspartate 159 and histidine 166. Residues asparagine 211–asparagine 217 constitute a propeptide that is removed on maturation. D-glucose-binding residues include glycine 246 and alanine 247. The propeptide occupies lysine 270–alanine 275.

It belongs to the leguminous lectin family. In terms of assembly, heterotetramer of two alpha and two beta chains. The mature form consists of two chains, alpha and beta, produced by cleavage of the immature protein. These remain cleaved, yet fold together to form one subunit.

D-mannose specific lectin. The sequence is that of Lectin from Lens culinaris subsp. orientalis (Oriental wild lentil).